A 418-amino-acid polypeptide reads, in one-letter code: MAP kinase-interacting serine/threonine-protein kinase 1 (418 aa).

A disordered region spans residues 1–23; sequence MVSSQPVPFDDGGKRRKKKRKTR. One can recognise a Protein kinase domain in the interval 37-321; it reads RLTDELLGEG…AFQVLQHPWL (285 aa). ATP contacts are provided by residues 43–51 and K66; that span reads LGEGAYAKV. Catalysis depends on D158, which acts as the Proton acceptor. The tract at residues 384 to 418 is disordered; it reads PPSKSRLAKRRAQAHARKGGSHPTHSTVTASQGTP. The span at 389 to 403 shows a compositional bias: basic residues; the sequence is RLAKRRAQAHARKGG. The segment covering 406–418 has biased composition (polar residues); sequence PTHSTVTASQGTP.

Belongs to the protein kinase superfamily. CAMK Ser/Thr protein kinase family. Mg(2+) is required as a cofactor.

The enzyme catalyses L-seryl-[protein] + ATP = O-phospho-L-seryl-[protein] + ADP + H(+). The catalysed reaction is L-threonyl-[protein] + ATP = O-phospho-L-threonyl-[protein] + ADP + H(+). May play a role in the response to environmental stress and cytokines. Appears to regulate translation by phosphorylating EIF4E, thus increasing the affinity of this protein for the 7-methylguanosine-containing mRNA cap. In Xenopus laevis (African clawed frog), this protein is MAP kinase-interacting serine/threonine-protein kinase 1 (mknk1).